The primary structure comprises 597 residues: MVLKRVRCYYLIITIRLKMKVFTNKNLSIEQYGFINTFPNQNYILSYLHPYNPYSSLIVCYDVGLGKTYAAACLAHMYLDSGFKVLYLSNSLNSIDNFSNEYEKVVLDSRLNSLKKNITIKSFSKFYNCEKRGESDNVDYGLIILDEVHNLRESAYRYKLIKNKLDTMNNSKILVITATPMIDSKDELDSILSLTKETSRIIFSENKIDIKISYVGQEINGETLFLSEMKGQQLKEYLKVVNEENDTVYSSSRQASISLSNKFNPSIPLDEQSSKINAFINSIKEGELTVLFSFYVKRGIDFTSSVLESIGYKKWNSNKKQKRTYAVIDGRTNKKNVEEILTSFNSIANIKGDNIHILLGSSVLSESITLYRVKHLHIISPFWNYGQIKQSIGRAIRIGSHEGLEDKSMKVYLHAAHYDKEGKDIDIWKIAYDKNKDIIKRLEELKIDNEFSNDSLLDIPKIDNEMVIKINEWVWDFRNCFDTNKFKISWCKIYEDKAIGYNLENNTKIMGNIPSYIRINRPIPGGYTIWRSCIDKKLRISFIDGEVNKFSKRGKLISNVNTSEIAKDLNCENNIESIINTLKEQNRYFDKQIEYDL.

In terms of domain architecture, Helicase ATP-binding spans 48–198; the sequence is LHPYNPYSSL…DSILSLTKET (151 aa). An ATP-binding site is contributed by 61 to 68; the sequence is YDVGLGKT. Residues 146–149 carry the DEVH box motif; sequence DEVH. Positions 275 to 467 constitute a Helicase C-terminal domain; sequence KINAFINSIK…DIPKIDNEMV (193 aa).

It belongs to the helicase family.

Functionally, the presence of the two linear plasmids, termed pGKL1 and pGKL2, in strains of Kluyveromyces lactis confers the killer phenotype to the host cell, by promoting the secretion of a toxin able to inhibit the growth of sensitive strains. This is an uncharacterized protein from Kluyveromyces lactis (strain ATCC 8585 / CBS 2359 / DSM 70799 / NBRC 1267 / NRRL Y-1140 / WM37) (Yeast).